The sequence spans 1962 residues: PIII-type proteinase (1962 aa).

The N-terminal stretch at 1-33 is a signal peptide; it reads MQRKKKGLSILLAGTVALGALAVLPVGEIQAKA. Residues 34–187 constitute a propeptide that is removed on maturation; it reads AISQQTKGSS…VTLAKVYYPT (154 aa). In terms of domain architecture, Peptidase S8 spans 191–697; that stretch reads ANSMANVQAV…AGLVDVKAAI (507 aa). Catalysis depends on charge relay system residues D217, H281, and S620. Positions 1796–1938 are disordered; it reads GKGDGTTGTS…KTGETTERPA (143 aa). Residues 1797–1812 are compositionally biased toward gly residues; it reads KGDGTTGTSDKGGGQG. Polar residues-rich tracts occupy residues 1856–1865 and 1890–1903; these read RNGQLTSGTS and SQPS…TNPA. An LPXTG sorting signal motif is present at residues 1927-1931; sequence LPKTG. T1930 carries the pentaglycyl murein peptidoglycan amidated threonine modification. The propeptide at 1931-1962 is removed by sortase; the sequence is GETTERPAFGFLGVIVVSLMGVLGLKRKQREE.

Belongs to the peptidase S8 family.

It localises to the secreted. It is found in the cell wall. It carries out the reaction Endopeptidase activity with very broad specificity, although some subsite preference have been noted, e.g. large hydrophobic residues in the P1 and P4 positions, and Pro in the P2 position. Best known for its action on caseins, although it has been shown to hydrolyze hemoglobin and oxidized insulin B-chain.. In terms of biological role, protease which breaks down milk proteins during the growth of the bacteria on milk. This chain is PIII-type proteinase (prtP), found in Lactococcus lactis subsp. cremoris (strain SK11).